Here is a 335-residue protein sequence, read N- to C-terminus: Holliday junction branch migration complex subunit RuvB (335 aa).

The segment at 4-184 (ADRLIQPTAL…FGIVQRLEFY (181 aa)) is large ATPase domain (RuvB-L). Residues I23, R24, G65, K68, T69, T70, 131–133 (EDY), R174, Y184, and R221 contribute to the ATP site. T69 is a binding site for Mg(2+). Positions 185-255 (NIKDLTQIVK…VASAALDMLD (71 aa)) are small ATPAse domain (RuvB-S). The head domain (RuvB-H) stretch occupies residues 258–335 (KEGFDYMDRK…LHFGYDYEPN (78 aa)). Residues R294, R313, and R318 each contribute to the DNA site.

The protein belongs to the RuvB family. In terms of assembly, homohexamer. Forms an RuvA(8)-RuvB(12)-Holliday junction (HJ) complex. HJ DNA is sandwiched between 2 RuvA tetramers; dsDNA enters through RuvA and exits via RuvB. An RuvB hexamer assembles on each DNA strand where it exits the tetramer. Each RuvB hexamer is contacted by two RuvA subunits (via domain III) on 2 adjacent RuvB subunits; this complex drives branch migration. In the full resolvosome a probable DNA-RuvA(4)-RuvB(12)-RuvC(2) complex forms which resolves the HJ.

The protein localises to the cytoplasm. It catalyses the reaction ATP + H2O = ADP + phosphate + H(+). The RuvA-RuvB-RuvC complex processes Holliday junction (HJ) DNA during genetic recombination and DNA repair, while the RuvA-RuvB complex plays an important role in the rescue of blocked DNA replication forks via replication fork reversal (RFR). RuvA specifically binds to HJ cruciform DNA, conferring on it an open structure. The RuvB hexamer acts as an ATP-dependent pump, pulling dsDNA into and through the RuvAB complex. RuvB forms 2 homohexamers on either side of HJ DNA bound by 1 or 2 RuvA tetramers; 4 subunits per hexamer contact DNA at a time. Coordinated motions by a converter formed by DNA-disengaged RuvB subunits stimulates ATP hydrolysis and nucleotide exchange. Immobilization of the converter enables RuvB to convert the ATP-contained energy into a lever motion, pulling 2 nucleotides of DNA out of the RuvA tetramer per ATP hydrolyzed, thus driving DNA branch migration. The RuvB motors rotate together with the DNA substrate, which together with the progressing nucleotide cycle form the mechanistic basis for DNA recombination by continuous HJ branch migration. Branch migration allows RuvC to scan DNA until it finds its consensus sequence, where it cleaves and resolves cruciform DNA. The sequence is that of Holliday junction branch migration complex subunit RuvB from Pseudoalteromonas atlantica (strain T6c / ATCC BAA-1087).